Here is a 74-residue protein sequence, read N- to C-terminus: Somatostatin-2 (74 aa).

A propeptide spanning residues 1 to 46 (ARGAGLLSQDWSAVEDLLAQMSLPEADAQREAEVVSVATGGRLNLE) is cleaved from the precursor. Cysteines 63 and 74 form a disulfide.

Belongs to the somatostatin family.

The protein localises to the secreted. Its function is as follows. Somatostatin inhibits the release of somatotropin. The chain is Somatostatin-2 (sst2) from Myoxocephalus scorpius (Shorthorn sculpin).